The following is a 290-amino-acid chain: UDP-N-acetylenolpyruvoylglucosamine reductase (290 aa).

Positions 20–187 constitute an FAD-binding PCMH-type domain; that stretch reads GVGGESEMWF…SRVRLKLRPS (168 aa). Residue R167 is part of the active site.

Belongs to the MurB family. It depends on FAD as a cofactor.

The protein localises to the cytoplasm. The enzyme catalyses UDP-N-acetyl-alpha-D-muramate + NADP(+) = UDP-N-acetyl-3-O-(1-carboxyvinyl)-alpha-D-glucosamine + NADPH + H(+). Its pathway is cell wall biogenesis; peptidoglycan biosynthesis. Functionally, cell wall formation. The chain is UDP-N-acetylenolpyruvoylglucosamine reductase from Deinococcus radiodurans (strain ATCC 13939 / DSM 20539 / JCM 16871 / CCUG 27074 / LMG 4051 / NBRC 15346 / NCIMB 9279 / VKM B-1422 / R1).